Here is a 373-residue protein sequence, read N- to C-terminus: MNMRRVFGGVSTDLFPSRSMYRPLQSGGNLVMLFKGCRRFVRTTCRVSIPGGSLGNESKAPPRFLRDRKIVPDADPPNMEDIHKLYRLFEQSSRLTILTGAGVSTECGIPDYRSPNGAYSSGFKPITHQEFTRSSRARRRYWARSYAGWRRFTAAQPGPAHTALASLEKAGRINFMITQNVDRLHHRAGSDPLELHGTVYTVMCLECGFSFPRDLFQDQLKAINPKWAEAIESIDHGDPGSEKSFGMKQRPDGDIEIDEKFWEEGFHIPVCEKCKGVLKPDVIFFGDNIPKERATQAMEVAKQSDAFLVLGSSLMTMSAFRLCRAAHEAGAMTAIVNIGETRADDIVPLKINARVGEILHRVLDVGSLSVPAL.

The transit peptide at 1 to 47 (MNMRRVFGGVSTDLFPSRSMYRPLQSGGNLVMLFKGCRRFVRTTCRV) directs the protein to the mitochondrion. Residues 75-373 (DPPNMEDIHK…DVGSLSVPAL (299 aa)) form the Deacetylase sirtuin-type domain. NAD(+)-binding positions include 100–120 (GAGV…GAYS) and 179–182 (QNVD). The active-site Proton acceptor is the His-196. The Zn(2+) site is built by Cys-204, Cys-207, Cys-271, and Cys-274. NAD(+) contacts are provided by residues 311-313 (GSS), 337-339 (NIG), and Val-355.

Belongs to the sirtuin family. Class II subfamily. As to quaternary structure, binds to the promoter region of genes influenced by ethylene. Interacts with ENAP1; this interaction is enhanced in the presence of ethylene. The cofactor is Zn(2+).

It localises to the mitochondrion matrix. It is found in the nucleus. It carries out the reaction N(6)-acetyl-L-lysyl-[protein] + NAD(+) + H2O = 2''-O-acetyl-ADP-D-ribose + nicotinamide + L-lysyl-[protein]. NAD-dependent protein deacylase. Catalyzes the NAD-dependent hydrolysis of acyl groups from lysine residues. Involved in responses to ethylene leading to the transcriptional repression of some ethylene-responsive genes via the regulation of histone acetylation H3K9Ac. Negatively regulates plant basal defense against plant pathogens, possibly by suppressing salicylic acid biosynthesis. The chain is NAD-dependent protein deacylase SRT2 from Arabidopsis thaliana (Mouse-ear cress).